Here is a 294-residue protein sequence, read N- to C-terminus: UDP-3-O-acyl-N-acetylglucosamine deacetylase (294 aa).

The Zn(2+) site is built by His-75, His-232, and Asp-236. Catalysis depends on His-259, which acts as the Proton donor.

The protein belongs to the LpxC family. Zn(2+) is required as a cofactor.

The catalysed reaction is a UDP-3-O-[(3R)-3-hydroxyacyl]-N-acetyl-alpha-D-glucosamine + H2O = a UDP-3-O-[(3R)-3-hydroxyacyl]-alpha-D-glucosamine + acetate. Its pathway is glycolipid biosynthesis; lipid IV(A) biosynthesis; lipid IV(A) from (3R)-3-hydroxytetradecanoyl-[acyl-carrier-protein] and UDP-N-acetyl-alpha-D-glucosamine: step 2/6. Catalyzes the hydrolysis of UDP-3-O-myristoyl-N-acetylglucosamine to form UDP-3-O-myristoylglucosamine and acetate, the committed step in lipid A biosynthesis. This is UDP-3-O-acyl-N-acetylglucosamine deacetylase from Campylobacter jejuni (strain RM1221).